The following is a 251-amino-acid chain: MKIIISPAKKMNMDGDFLSPRNIPVYLEKAKKLQRHLQSLPYEELRKLLCCNDEIAGLNYERYQTMDLSGYTSPAILAYDGIQYKYMAPQVFEDDYFDYIEKHLRILSGFYGILKPFDGVVPYRLEMQAKLKTDFCRNLYDYWQDDIYRELTQEDTTILNLASAEYSKTIEKYLTAGINYVKCVFGELRDGRVIEKGVYVKMARGEMVRFMAEKAIKDLEQIKEFNRLGFRYREQLSDNNTFVFVKAMAEK.

It belongs to the UPF0246 family.

The sequence is that of UPF0246 protein DSY0297 from Desulfitobacterium hafniense (strain Y51).